We begin with the raw amino-acid sequence, 398 residues long: Argininosuccinate synthase (398 aa).

8–16 (AYSGGLDTS) serves as a coordination point for ATP. Y87 serves as a coordination point for L-citrulline. G117 contributes to the ATP binding site. L-aspartate is bound by residues T119, N123, and D124. N123 provides a ligand contact to L-citrulline. Residues R127, S175, E260, and Y272 each contribute to the L-citrulline site.

It belongs to the argininosuccinate synthase family. Type 1 subfamily. In terms of assembly, homotetramer.

Its subcellular location is the cytoplasm. The catalysed reaction is L-citrulline + L-aspartate + ATP = 2-(N(omega)-L-arginino)succinate + AMP + diphosphate + H(+). It functions in the pathway amino-acid biosynthesis; L-arginine biosynthesis; L-arginine from L-ornithine and carbamoyl phosphate: step 2/3. The polypeptide is Argininosuccinate synthase (Mycobacterium tuberculosis (strain ATCC 25618 / H37Rv)).